Here is a 344-residue protein sequence, read N- to C-terminus: Succinylglutamate desuccinylase (344 aa).

3 residues coordinate Zn(2+): His-63, Glu-66, and His-160. Glu-224 is an active-site residue.

The protein belongs to the AspA/AstE family. Succinylglutamate desuccinylase subfamily. Zn(2+) serves as cofactor.

The enzyme catalyses N-succinyl-L-glutamate + H2O = L-glutamate + succinate. It functions in the pathway amino-acid degradation; L-arginine degradation via AST pathway; L-glutamate and succinate from L-arginine: step 5/5. In terms of biological role, transforms N(2)-succinylglutamate into succinate and glutamate. The sequence is that of Succinylglutamate desuccinylase from Shewanella putrefaciens (strain CN-32 / ATCC BAA-453).